Reading from the N-terminus, the 246-residue chain is 4-hydroxy-tetrahydrodipicolinate reductase (246 aa).

NAD(+) contacts are provided by residues 8 to 13 (GAKGRM), 74 to 76 (GTT), and 101 to 104 (APNF). Residue H131 is the Proton donor/acceptor of the active site. H132 contributes to the (S)-2,3,4,5-tetrahydrodipicolinate binding site. K135 serves as the catalytic Proton donor. Residue 141-142 (GT) participates in (S)-2,3,4,5-tetrahydrodipicolinate binding.

Belongs to the DapB family.

It is found in the cytoplasm. The catalysed reaction is (S)-2,3,4,5-tetrahydrodipicolinate + NAD(+) + H2O = (2S,4S)-4-hydroxy-2,3,4,5-tetrahydrodipicolinate + NADH + H(+). It carries out the reaction (S)-2,3,4,5-tetrahydrodipicolinate + NADP(+) + H2O = (2S,4S)-4-hydroxy-2,3,4,5-tetrahydrodipicolinate + NADPH + H(+). It participates in amino-acid biosynthesis; L-lysine biosynthesis via DAP pathway; (S)-tetrahydrodipicolinate from L-aspartate: step 4/4. In terms of biological role, catalyzes the conversion of 4-hydroxy-tetrahydrodipicolinate (HTPA) to tetrahydrodipicolinate. The chain is 4-hydroxy-tetrahydrodipicolinate reductase from Cutibacterium acnes (strain DSM 16379 / KPA171202) (Propionibacterium acnes).